A 60-amino-acid chain; its full sequence is LECNQLIPIAHKTCPEGKNLCYKMFMVSTSTVPVKRGCIDVCPKNSALVKYVCCNTDRCN.

Disulfide bonds link C3–C21, C14–C38, C42–C53, and C54–C59.

Belongs to the three-finger toxin family. Short-chain subfamily. Type IA cytotoxin sub-subfamily. As to quaternary structure, monomer in solution; Homodimer and oligomer in the presence of negatively charged lipids forming a pore with a size ranging between 20 and 30 Angstroms. As to expression, expressed by the venom gland.

The protein localises to the secreted. It localises to the target cell membrane. Functionally, shows cytolytic activity on many different cells by forming pore in lipid membranes. In vivo, increases heart rate or kills the animal by cardiac arrest. In addition, it binds to heparin with high affinity, interacts with Kv channel-interacting protein 1 (KCNIP1) in a calcium-independent manner, and binds to integrin alpha-V/beta-3 (ITGAV/ITGB3) with moderate affinity. This chain is Cytotoxin 10, found in Naja annulifera (Banded Egyptian cobra).